The following is a 168-amino-acid chain: uncharacterized protein (168 aa).

3 disordered regions span residues 1 to 35 (MGSSKSSKKDKQIHPFGTDVSTFRKLSSKEKKKLD), 48 to 97 (KVKK…DKGN), and 126 to 168 (ASIT…GLGM). The stretch at 29–95 (KEKKKLDEKE…KNSLSRSQDK (67 aa)) forms a coiled coil. Positions 68–85 (LAEDPMVKNVAENDHDQM) are enriched in basic and acidic residues. Residues 126–139 (ASITESSPSAQSNK) show a composition bias toward polar residues. Positions 140-150 (TNDKQREKELE) are enriched in basic and acidic residues. A compositionally biased stretch (basic residues) spans 157–168 (VLHKGTKKGLGM).

This is an uncharacterized protein from Schizosaccharomyces pombe (strain 972 / ATCC 24843) (Fission yeast).